We begin with the raw amino-acid sequence, 423 residues long: MSASAVYVLDLKGKVLICRNYRGDVDMSEVEHFMPILMEKEEEGMLSPILAHGGVRFMWIKHNNLYLVATSKKNACVSLVFSFLYKVVQVFSEYFKELEEESIRDNFVIIYELLDELMDFGYPQTTDSKILQEYITQEGHKLETGAPRPPATVTNAVSWRSEGIKYRKNEVFLDVIEAVNLLVSANGNVLRSEIVGSIKMRVFLSGMPELRLGLNDKVLFDNTGRGKSKSVELEDVKFHQCVRLSRFENDRTISFIPPDGEFELMSYRLNTHVKPLIWIESVIEKHSHSRIEYMVKAKSQFKRRSTANNVEIHIPVPNDADSPKFKTTVGSVKWVPENSEIVWSIKSFPGGKEYLMRAHFGLPSVEAEDKEGKPPISVKFEIPYFTTSGIQVRYLKIIEKSGYQALPWVRYITQNGDYQLRTQ.

Ser-2 is modified (N-acetylserine). A phosphothreonine mark is found at Thr-152, Thr-154, and Thr-223. Positions 168-421 (KNEVFLDVIE…ITQNGDYQLR (254 aa)) constitute an MHD domain.

It belongs to the adaptor complexes medium subunit family. Adaptor protein complex 1 (AP-1) is a heterotetramer composed of two large adaptins (gamma-type subunit AP1G1 and beta-type subunit AP1B1), a medium adaptin (mu-type subunit AP1M1 or AP1M2) and a small adaptin (sigma-type subunit AP1S1 or AP1S2 or AP1S3). Interacts with MARCHF11. Phosphorylation of membrane-bound AP1M1/AP1M2 increases its affinity for sorting signals.

Its subcellular location is the cytoplasmic vesicle. The protein resides in the clathrin-coated vesicle membrane. It localises to the golgi apparatus. Functionally, subunit of clathrin-associated adaptor protein complex 1 that plays a role in protein sorting in the trans-Golgi network (TGN) and endosomes. The AP complexes mediate the recruitment of clathrin to membranes and the recognition of sorting signals within the cytosolic tails of transmembrane cargo molecules. The polypeptide is AP-1 complex subunit mu-1 (Rattus norvegicus (Rat)).